We begin with the raw amino-acid sequence, 369 residues long: Glycine oxidase (369 aa).

FAD-binding positions include 14–15, 34–35, 42–43, 47–49, and valine 174; these read II, ES, TT, and AGM. The substrate site is built by arginine 302 and arginine 329. 327-333 provides a ligand contact to FAD; sequence HFRNGIL.

This sequence belongs to the DAO family. ThiO subfamily. Homotetramer. FAD is required as a cofactor.

The protein localises to the cytoplasm. It carries out the reaction glycine + O2 + H2O = glyoxylate + H2O2 + NH4(+). The enzyme catalyses N-ethylglycine + O2 + H2O = ethylamine + glyoxylate + H2O2. It catalyses the reaction sarcosine + O2 + H2O = methylamine + glyoxylate + H2O2. The catalysed reaction is D-alanine + O2 + H2O = pyruvate + H2O2 + NH4(+). It carries out the reaction glyphosate + O2 + H2O = aminomethylphosphonate + glyoxylate + H2O2 + H(+). It functions in the pathway cofactor biosynthesis; thiamine diphosphate biosynthesis. With respect to regulation, is competitively inhibited by glycolate. Its function is as follows. Catalyzes the FAD-dependent oxidative deamination of various amines and D-amino acids to yield the corresponding alpha-keto acids, ammonia/amine, and hydrogen peroxide. Oxidizes sarcosine (N-methylglycine), N-ethylglycine and glycine. Can also oxidize the herbicide glyphosate (N-phosphonomethylglycine). Displays lower activities on D-alanine, D-valine, D-proline and D-methionine. Does not act on L-amino acids and other D-amino acids. Is essential for thiamine biosynthesis since the oxidation of glycine catalyzed by ThiO generates the glycine imine intermediate (dehydroglycine) required for the biosynthesis of the thiazole ring of thiamine pyrophosphate. This chain is Glycine oxidase, found in Bacillus subtilis (strain 168).